The chain runs to 137 residues: Small ribosomal subunit protein uS9 (137 aa).

The tract at residues 100 to 137 (ENRPPLKSEGYLTRDPRAKERKKYGLHKARKAPQYSKR) is disordered. Over residues 118–137 (KERKKYGLHKARKAPQYSKR) the composition is skewed to basic residues.

It belongs to the universal ribosomal protein uS9 family.

This chain is Small ribosomal subunit protein uS9, found in Microcystis aeruginosa (strain NIES-843 / IAM M-2473).